Reading from the N-terminus, the 870-residue chain is Radial spoke head 10 homolog B (870 aa).

Basic and acidic residues predominate over residues 1 to 16 (MVKEKKKADKKGEKSA). The segment at 1–43 (MVKEKKKADKKGEKSARSPSSLSDNLDFSKQDGNTTRQEMSPA) is disordered. Over residues 17–39 (RSPSSLSDNLDFSKQDGNTTRQE) the composition is skewed to polar residues. MORN repeat units lie at residues 86-108 (YEGE…GGCT), 109-131 (YRGM…DGLK), 132-154 (YEGD…DGSM), 155-177 (YEGE…TQPV), 179-201 (YIGH…QEGT), 204-226 (YEGD…SGNI), 227-249 (YEGQ…TTNE), 251-273 (YTGR…LKRI), 284-306 (YIGE…SGAM), and 307-329 (YDGE…NGRV). The interval 674 to 704 (NKSPSAVMSHESDAAHSDSARSSSSKLELSP) is disordered. Residues 683–692 (HESDAAHSDS) show a composition bias toward basic and acidic residues. Positions 693–703 (ARSSSSKLELS) are enriched in low complexity. Residues 784 to 811 (KEKIRADRLRSTAQAQQRKMEDDELEAR) are a coiled coil. A disordered region spans residues 840–870 (VSSSHLILDPPKEDVTVSPSSKTITSKKKKK).

As to quaternary structure, interacts with RSPH6A. Does not appear to be part of the axonemal radial spoke complexes 1 or 2.

The protein resides in the cytoplasm. Its subcellular location is the cytoskeleton. The protein localises to the cilium axoneme. It is found in the cell projection. It localises to the cilium. The protein resides in the flagellum. In terms of biological role, may function as part of the axonemal radial spoke complex 3 (RS3). Radial spoke complexes are important for ciliary motility. This is Radial spoke head 10 homolog B (RSPH10B) from Homo sapiens (Human).